The following is a 370-amino-acid chain: A-type ATP synthase subunit C (370 aa).

Belongs to the V-ATPase V0D/AC39 subunit family. In terms of assembly, has multiple subunits with at least A(3), B(3), C, D, E, F, H, I and proteolipid K(x).

Its subcellular location is the cell membrane. Functionally, component of the A-type ATP synthase that produces ATP from ADP in the presence of a proton gradient across the membrane. The chain is A-type ATP synthase subunit C from Pyrococcus furiosus (strain ATCC 43587 / DSM 3638 / JCM 8422 / Vc1).